Here is a 544-residue protein sequence, read N- to C-terminus: Ceramide glucosyltransferase (544 aa).

Residues 1–15 lie on the Lumenal side of the membrane; the sequence is MVQEELSLFRITTGY. A helical transmembrane segment spans residues 16–36; sequence FFLLWYIIILVAAYSGFFEIL. Topologically, residues 37-427 are cytoplasmic; the sequence is FNFRNRPILH…LATLIEPTTE (391 aa). A short sequence motif (D1) is located at residue D109. D171 is a short sequence motif (D2). D364 is a short sequence motif (D3). The active-site Proton acceptor is the D364. Positions 404 to 408 match the (Q/R)XXRW motif; that stretch reads RRVRW. A helical transmembrane segment spans residues 428–448; that stretch reads SIICGIYGTYAISTVFFGTWF. Residues 449 to 451 are Lumenal-facing; the sequence is NKY. A helical transmembrane segment spans residues 452–472; it reads WFVMHMLIWMLTDYVQYHTLI. Residues 473–501 are Cytoplasmic-facing; that stretch reads NHTLDVKNITYLPNWLNESIPPKQRNCLQ. Residues 502–522 traverse the membrane as a helical segment; sequence WGYIWILRELLALPIWIIAMI. Topologically, residues 523–544 are lumenal; that stretch reads GHEIDWRGRPFRIKKDLTAEEM.

It belongs to the glycosyltransferase 2 family.

It localises to the golgi apparatus membrane. It catalyses the reaction an N-acylsphing-4-enine + UDP-alpha-D-glucose = a beta-D-glucosyl-(1&lt;-&gt;1')-N-acylsphing-4-enine + UDP + H(+). It participates in lipid metabolism; sphingolipid metabolism. Its function is as follows. Catalyzes the final step in the biosynthesis of the membrane lipid glucosylceramide (GluCer), the transfer of glucose to ceramide. Glucosylceramides play important roles in growth, differentiation and pathogenicity. The polypeptide is Ceramide glucosyltransferase (Candida albicans (strain SC5314 / ATCC MYA-2876) (Yeast)).